Here is a 207-residue protein sequence, read N- to C-terminus: Holliday junction branch migration complex subunit RuvA (207 aa).

Positions 1 to 68 (MIGYLQGSLA…EDQWLLFGFL (68 aa)) are domain I. The tract at residues 69 to 147 (QMAERDLFRQ…EWREEAGLLP (79 aa)) is domain II. A flexible linker region spans residues 148 to 158 (SATAAPIAAVQ). The segment at 158 to 207 (QEDVEMTLLALGYNNREILQALTAIAQENLVQSGQPAEDWIREAIAWLSR) is domain III.

This sequence belongs to the RuvA family. As to quaternary structure, homotetramer. Forms an RuvA(8)-RuvB(12)-Holliday junction (HJ) complex. HJ DNA is sandwiched between 2 RuvA tetramers; dsDNA enters through RuvA and exits via RuvB. An RuvB hexamer assembles on each DNA strand where it exits the tetramer. Each RuvB hexamer is contacted by two RuvA subunits (via domain III) on 2 adjacent RuvB subunits; this complex drives branch migration. In the full resolvosome a probable DNA-RuvA(4)-RuvB(12)-RuvC(2) complex forms which resolves the HJ.

The protein resides in the cytoplasm. The RuvA-RuvB-RuvC complex processes Holliday junction (HJ) DNA during genetic recombination and DNA repair, while the RuvA-RuvB complex plays an important role in the rescue of blocked DNA replication forks via replication fork reversal (RFR). RuvA specifically binds to HJ cruciform DNA, conferring on it an open structure. The RuvB hexamer acts as an ATP-dependent pump, pulling dsDNA into and through the RuvAB complex. HJ branch migration allows RuvC to scan DNA until it finds its consensus sequence, where it cleaves and resolves the cruciform DNA. This Synechococcus elongatus (strain ATCC 33912 / PCC 7942 / FACHB-805) (Anacystis nidulans R2) protein is Holliday junction branch migration complex subunit RuvA.